Here is a 226-residue protein sequence, read N- to C-terminus: UPF0173 metal-dependent hydrolase CTN_1413 (226 aa).

This sequence belongs to the UPF0173 family.

The polypeptide is UPF0173 metal-dependent hydrolase CTN_1413 (Thermotoga neapolitana (strain ATCC 49049 / DSM 4359 / NBRC 107923 / NS-E)).